We begin with the raw amino-acid sequence, 283 residues long: Pantoate--beta-alanine ligase (283 aa).

Belongs to the pantothenate synthetase family.

It carries out the reaction (R)-pantoate + beta-alanine + ATP = (R)-pantothenate + AMP + diphosphate + H(+). The protein operates within cofactor biosynthesis; (R)-pantothenate biosynthesis; (R)-pantothenate from (R)-pantoate and beta-alanine: step 1/1. This chain is Pantoate--beta-alanine ligase (pan6), found in Schizosaccharomyces pombe (strain 972 / ATCC 24843) (Fission yeast).